The chain runs to 573 residues: PCNA-interacting partner (573 aa).

The segment at 463 to 511 is disordered; sequence VSEGAQPSVGKARLETSSENVHVDRSKDDKGPRKSTKRKLAKSKQPGVR. Over residues 474 to 494 the composition is skewed to basic and acidic residues; the sequence is ARLETSSENVHVDRSKDDKGP. Basic residues predominate over residues 495–504; it reads RKSTKRKLAK.

This sequence belongs to the PARI family. As to quaternary structure, interacts with RAD51 and PCNA. Interacts with PARP1. Interacts with TASOR. In terms of tissue distribution, present in testis (at protein level). Expressed in testis, gastrointestinal tract (jejunum, ileum, and colon) and immune system (thymus and spleen). Weakly expressed in lung, kidney, pituitary gland and muscle.

The protein localises to the cytoplasm. It is found in the nucleus. Its function is as follows. Required to suppress inappropriate homologous recombination, thereby playing a central role DNA repair and in the maintenance of genomic stability. Antagonizes homologous recombination by interfering with the formation of the RAD51-DNA homologous recombination structure. Positively regulate the poly(ADP-ribosyl)ation activity of PARP1; however such function may be indirect. Binds single-strand DNA and poly(A) homopolymers. The sequence is that of PCNA-interacting partner (Parpbp) from Rattus norvegicus (Rat).